We begin with the raw amino-acid sequence, 20 residues long: Fibrinogen beta chain (20 aa).

Y5 is subject to Sulfotyrosine.

As to quaternary structure, heterohexamer; disulfide linked. Contains 2 sets of 3 non-identical chains (alpha, beta and gamma). The 2 heterotrimers are in head to head conformation with the N-termini in a small central domain. In terms of processing, conversion of fibrinogen to fibrin is triggered by thrombin, which cleaves fibrinopeptides A and B from alpha and beta chains, and thus exposes the N-terminal polymerization sites responsible for the formation of the soft clot.

The protein localises to the secreted. Functionally, cleaved by the protease thrombin to yield monomers which, together with fibrinogen alpha (FGA) and fibrinogen gamma (FGG), polymerize to form an insoluble fibrin matrix. Fibrin has a major function in hemostasis as one of the primary components of blood clots. In addition, functions during the early stages of wound repair to stabilize the lesion and guide cell migration during re-epithelialization. Was originally thought to be essential for platelet aggregation, based on in vitro studies using anticoagulated blood. However subsequent studies have shown that it is not absolutely required for thrombus formation in vivo. Enhances expression of SELP in activated platelets. Maternal fibrinogen is essential for successful pregnancy. Fibrin deposition is also associated with infection, where it protects against IFNG-mediated hemorrhage. May also facilitate the antibacterial immune response via both innate and T-cell mediated pathways. The sequence is that of Fibrinogen beta chain (FGB) from Capra hircus (Goat).